A 380-amino-acid chain; its full sequence is Chaperone protein DnaJ (380 aa).

Positions 5 to 72 constitute a J domain; the sequence is DYYDTLGVPK…QKRAAYDQYG (68 aa). Positions 21-47 are disordered; it reads IKKAYRKLAMKHHPDRNQGDTSKVSED. The segment covering 24-34 has biased composition (basic residues); it reads AYRKLAMKHHP. Positions 35 to 47 are enriched in basic and acidic residues; the sequence is DRNQGDTSKVSED. Residues 139 to 217 form a CR-type zinc finger; it reads GKEAQIRIPS…CHGVGKTKNN (79 aa). Zn(2+) contacts are provided by C152, C155, C169, C172, C191, C194, C205, and C208. 4 CXXCXGXG motif repeats span residues 152–159, 169–176, 191–198, and 205–212; these read CGICHGTG, CTTCHGHG, CPQCKGSG, and CVACHGVG.

The protein belongs to the DnaJ family. As to quaternary structure, homodimer. The cofactor is Zn(2+).

It is found in the cytoplasm. In terms of biological role, participates actively in the response to hyperosmotic and heat shock by preventing the aggregation of stress-denatured proteins and by disaggregating proteins, also in an autonomous, DnaK-independent fashion. Unfolded proteins bind initially to DnaJ; upon interaction with the DnaJ-bound protein, DnaK hydrolyzes its bound ATP, resulting in the formation of a stable complex. GrpE releases ADP from DnaK; ATP binding to DnaK triggers the release of the substrate protein, thus completing the reaction cycle. Several rounds of ATP-dependent interactions between DnaJ, DnaK and GrpE are required for fully efficient folding. Also involved, together with DnaK and GrpE, in the DNA replication of plasmids through activation of initiation proteins. The polypeptide is Chaperone protein DnaJ (Polaromonas naphthalenivorans (strain CJ2)).